Reading from the N-terminus, the 264-residue chain is 3-methyl-2-oxobutanoate hydroxymethyltransferase (264 aa).

Residues aspartate 45 and aspartate 84 each coordinate Mg(2+). 3-methyl-2-oxobutanoate contacts are provided by residues 45 to 46 (DS), aspartate 84, and lysine 112. A Mg(2+)-binding site is contributed by glutamate 114. The Proton acceptor role is filled by glutamate 181.

Belongs to the PanB family. As to quaternary structure, homodecamer; pentamer of dimers. The cofactor is Mg(2+).

The protein localises to the cytoplasm. It catalyses the reaction 3-methyl-2-oxobutanoate + (6R)-5,10-methylene-5,6,7,8-tetrahydrofolate + H2O = 2-dehydropantoate + (6S)-5,6,7,8-tetrahydrofolate. Its pathway is cofactor biosynthesis; (R)-pantothenate biosynthesis; (R)-pantoate from 3-methyl-2-oxobutanoate: step 1/2. In terms of biological role, catalyzes the reversible reaction in which hydroxymethyl group from 5,10-methylenetetrahydrofolate is transferred onto alpha-ketoisovalerate to form ketopantoate. In Pseudoalteromonas translucida (strain TAC 125), this protein is 3-methyl-2-oxobutanoate hydroxymethyltransferase.